We begin with the raw amino-acid sequence, 525 residues long: Neuropilin and tolloid-like protein 2 (525 aa).

Residues 1–22 (MALEQLCAVLKVLLITVLVVEG) form the signal peptide. At 23–347 (IAVAQKTQDG…GLFEQITKTH (325 aa)) the chain is on the extracellular side. Disulfide bonds link cysteine 45-cysteine 72, cysteine 100-cysteine 122, cysteine 177-cysteine 207, cysteine 234-cysteine 256, cysteine 297-cysteine 309, cysteine 304-cysteine 322, and cysteine 316-cysteine 331. CUB domains follow at residues 45–159 (CGIW…YSFI) and 177–292 (CQFE…FTSF). The LDL-receptor class A domain maps to 296–332 (PCTSSTFFCHSNMCINNSLVCNGVQNCAYPWDENHCK). N-linked (GlcNAc...) asparagine glycosylation is present at asparagine 311. The chain crosses the membrane as a helical span at residues 348–368 (GTIIGITSGIVLVLLIISILV). Topologically, residues 369-525 (QVKQPRKKVM…SAQASISIDF (157 aa)) are cytoplasmic. At serine 409 the chain carries Phosphoserine.

In terms of assembly, interacts with GRIK2 and GRIK3, but neither with AMPA-nor with NMDA-sensitive glutamate receptors. Post-translationally, N-glycosylated. Expressed in brain tissues, including cerebellar granule cells (at protein level).

It is found in the cell membrane. In terms of biological role, accessory subunit of neuronal kainate-sensitive glutamate receptors, GRIK2 and GRIK3. Increases kainate-receptor channel activity, slowing the decay kinetics of the receptors, without affecting their expression at the cell surface, and increasing the open probability of the receptor channels. Modulates the agonist sensitivity of kainate receptors. Slows the decay of kainate receptor-mediated excitatory postsynaptic currents (EPSCs), thus directly influencing synaptic transmission. The chain is Neuropilin and tolloid-like protein 2 (Neto2) from Mus musculus (Mouse).